We begin with the raw amino-acid sequence, 568 residues long: NADPH oxidase 3 (568 aa).

Residues 1-12 (MPTCWILNESVS) lie on the Cytoplasmic side of the membrane. Residues 13-33 (FVVALLWLAINIYLFIDTFCW) traverse the membrane as a helical segment. Residues 34-49 (YAEEESFFYTRVILGS) lie on the Extracellular side of the membrane. Residues 50–70 (ALAWARASAVCLNFNCMLILL) traverse the membrane as a helical segment. The Ferric oxidoreductase domain occupies 55-284 (RASAVCLNFN…VVLYACEIII (230 aa)). At 71 to 103 (PVSRNFVSLVRGTSVCCRGPWRRQLDKNLKFHK) the chain is on the cytoplasmic side. Residues 104-124 (LVAYGIAVNSVIHIVAHLFNL) traverse the membrane as a helical segment. The Extracellular segment spans residues 125–167 (ERYHLGQAKDAEGLLAALSKLGNAPNESYLNPVRTLYTGTTTQ). Residues 168 to 188 (LLMTVSGITGLVISLALILIM) traverse the membrane as a helical segment. Over 189 to 201 (TSSTEFIRQSSYE) the chain is Cytoplasmic. Residues 202–222 (LFWYTHHIFIFLFISLAIHGG) traverse the membrane as a helical segment. Residues 223–395 (GRIIRGQTPE…DGPFGGSLAD (173 aa)) are Extracellular-facing. An N-linked (GlcNAc...) asparagine glycan is attached at N238. One can recognise an FAD-binding FR-type domain in the interval 285 to 395 (RFWRSHQEVV…DGPFGGSLAD (111 aa)). Residues 396–416 (VFHYPVSVCIATGIGVTPFAS) traverse the membrane as a helical segment. At 417 to 568 (LLKSVWYKCC…VHFYYNKENF (152 aa)) the chain is on the cytoplasmic side.

In terms of assembly, forms a heterodimer with CYBA/p22phox which is essential for its activity and cell membrane localization. It depends on heme as a cofactor. In terms of processing, N-glycosylated in a CYBA/p22phox-dependent manner. As to expression, expressed in the inner ear by the spiral glanglia and the organ of Corti.

It is found in the cell membrane. It carries out the reaction NADPH + 2 O2 = 2 superoxide + NADP(+) + H(+). Activated by the ototoxic drug cisplatin. Activated by NOXO1. Cooperatively activated by NCF1 and NCF2 or NOXA1 in a phorbol 12-myristate 13-acetate (PMA)-dependent manner. Inhibited by diphenyleneiodonium chloride. NADPH oxidase that catalyzes the generation of superoxide from molecular oxygen utilizing NADPH as an electron donor, upon formation of a complex with CYBA/p22phox. Plays a role in the biogenesis of otoconia/otolith, which are crystalline structures of the inner ear involved in the perception of gravity. This is NADPH oxidase 3 (Nox3) from Rattus norvegicus (Rat).